The chain runs to 891 residues: von Willebrand factor A domain-containing protein 7 (891 aa).

The signal sequence occupies residues 1-28 (MLPTEVPQSHPGPSALLLLQLLLPPTSA). Asn-55 carries N-linked (GlcNAc...) asparagine glycosylation. The segment at 237–272 (PKPPGKCSHGGHFDRSSSQPPRGGINKDSTSPGFSP) is disordered. One can recognise a VWFA domain in the interval 313 to 506 (ASSLSFVLDT…SMAALVTLPL (194 aa)).

In terms of tissue distribution, expressed at low level in different cell lines.

It is found in the secreted. The chain is von Willebrand factor A domain-containing protein 7 (VWA7) from Homo sapiens (Human).